Reading from the N-terminus, the 634-residue chain is uncharacterized protein (634 aa).

A signal peptide spans 1–40 (MWLQQRLKGLPGLLSSSWARRLLCLLGLLVLLLWFAGSGA). Over 41-589 (RRAAGGLQLL…DEHMAQQDPG (549 aa)) the chain is Extracellular. Asn363 carries an N-linked (GlcNAc...) asparagine glycan. A helical transmembrane segment spans residues 590-610 (LPFLFWFSVASLITLFHLFLF). Residues 611-634 (KLIYNEYCGPGAKPFFRNKEDPSV) are Cytoplasmic-facing.

It localises to the membrane. This is an uncharacterized protein from Bos taurus (Bovine).